We begin with the raw amino-acid sequence, 104 residues long: Ig lambda-2 chain C region (104 aa).

The region spanning 6–99 is the Ig-like domain; sequence PTLTVFPPST…EGNTVEKSLS (94 aa). C27 and C85 form a disulfide bridge.

The protein is Ig lambda-2 chain C region of Rattus norvegicus (Rat).